Consider the following 705-residue polypeptide: Solute carrier family 12 member 8 (705 aa).

The next 11 membrane-spanning stretches (helical) occupy residues 38–58 (FGTW…VVLF), 69–89 (GVLL…ITVL), 92–112 (IGVA…ISSV), 121–141 (VGLL…TGFA), 159–179 (ISVA…KWII), 181–201 (LQLL…VGSF), 232–252 (FFTV…GFNM), 268–288 (LAAV…LGAV), 306–326 (LVGF…CMGG), 368–388 (LVTM…VVTI), and 390–410 (FMLT…AHCG). The tract at residues 472–512 (ESRQLGSREGNNPKNQKRKGKKGAKQTLQDSFLLDPGSPLS) is disordered. The span at 486 to 495 (NQKRKGKKGA) shows a compositional bias: basic residues. Helical transmembrane passes span 587 to 607 (WVSL…QWLY) and 612 to 632 (MGVA…LYLG).

Belongs to the SLC12A transporter family.

The protein localises to the membrane. Functionally, cation/chloride cotransporter that may play a role in the control of keratinocyte proliferation. The chain is Solute carrier family 12 member 8 (Slc12a8) from Mus musculus (Mouse).